We begin with the raw amino-acid sequence, 498 residues long: Transcription factor kayak (498 aa).

Residues Ala-108–Gln-127 show a composition bias toward polar residues. Disordered regions lie at residues Ala-108–Ser-144 and Gly-177–Val-234. Low complexity-rich tracts occupy residues Thr-135 to Ser-144 and Gly-177 to Thr-191. Positions Glu-212–His-275 constitute a bZIP domain. Positions Lys-214–Arg-233 are basic motif. The leucine-zipper stretch occupies residues Leu-240–Leu-247. Residues Ala-304–Gly-325 show a composition bias toward low complexity. Disordered stretches follow at residues Ala-304–Asp-345 and Thr-465–Leu-498. Positions Thr-333–Pro-343 are enriched in polar residues. Ser-342 is modified (phosphoserine).

The protein belongs to the bZIP family. Fos subfamily. Homodimer. Heterodimer with Jra. The kay-Jra heterodimer binds more stably to the AP-1 site than either of the two proteins alone.

The protein resides in the nucleus. In terms of biological role, developmentally regulated transcription factor AP-1 binds and recognizes the enhancer DNA sequence: 5'-TGA[CG]TCA-3'. May play a role in the function or determination of a particular subset of cells in the developing embryo. It is able to carry out its function either independently of or in conjunction with Jra. This chain is Transcription factor kayak, found in Drosophila simulans (Fruit fly).